A 351-amino-acid polypeptide reads, in one-letter code: DNA beta-glucosyltransferase (351 aa).

Monomer.

The enzyme catalyses Transfers a beta-D-glucosyl residue from UDP-alpha-D-glucose to a hydroxymethylcytosine residue in DNA.. The protein operates within genetic information processing; DNA modification. Its function is as follows. Catalyzes the transfer of glucose from uridine diphosphoglucose to 5-hydroxymethyl cytosine of T4 DNA to yield glucosyl 5-hydroxymethyl cytosine (glc-HMC). This DNA process seems to occur immediately after DNA synthesis since the DNA alpha-glucosyltransferase interacts with the clamp protein gp45. The glc-HMC modification protects the phage genome against its own nucleases and the host restriction endonuclease system. The glc-HMC modification also protects against the host CRISPR-Cas9 defense system. The polypeptide is DNA beta-glucosyltransferase (bgt) (Enterobacteria phage T4 (Bacteriophage T4)).